A 100-amino-acid polypeptide reads, in one-letter code: Urease subunit gamma (100 aa).

The protein belongs to the urease gamma subunit family. As to quaternary structure, heterotrimer of UreA (gamma), UreB (beta) and UreC (alpha) subunits. Three heterotrimers associate to form the active enzyme.

Its subcellular location is the cytoplasm. It catalyses the reaction urea + 2 H2O + H(+) = hydrogencarbonate + 2 NH4(+). It functions in the pathway nitrogen metabolism; urea degradation; CO(2) and NH(3) from urea (urease route): step 1/1. This chain is Urease subunit gamma, found in Actinobacillus pleuropneumoniae (Haemophilus pleuropneumoniae).